The primary structure comprises 195 residues: MGSRASTLLRDEEIEEIKKETGFSHSQITRLYSRFTSLDKGENGTLSREDFQRIPELAINPLGDRIINAFFSEGEDQVNFRGFMRTLAHFRPIEDNEKSKDQNGPEPLNSRSNKLHFAFRLYDLDKDDKISRDELLQVLRMMVGVNISDEQLGSIADRTIQEADQDGDCAISFAEFVKVLEKVDVEQKMSIRFLH.

Residue Gly-2 is the site of N-myristoyl glycine attachment. EF-hand domains follow at residues 26–61, 66–101, 110–145, and 151–186; these read SQITRLYSRFTSLDKGENGTLSREDFQRIPELAINP, IINAFFSEGEDQVNFRGFMRTLAHFRPIEDNEKSKD, SRSNKLHFAFRLYDLDKDDKISRDELLQVLRMMVGV, and QLGSIADRTIQEADQDGDCAISFAEFVKVLEKVDVE. Asp-123, Asp-125, Asp-127, Lys-129, Glu-134, Asp-164, Asp-166, Asp-168, and Glu-175 together coordinate Ca(2+).

This sequence belongs to the calcineurin regulatory subunit family. CHP subfamily. Monomer. In terms of processing, phosphorylated. Post-translationally, calcium-binding or N-myristoylation are necessary for the Na(+)/H(+) exchange activities.

It localises to the nucleus. The protein localises to the cytoplasm. Its subcellular location is the cytoskeleton. It is found in the endomembrane system. The protein resides in the endoplasmic reticulum-Golgi intermediate compartment. It localises to the endoplasmic reticulum. The protein localises to the cell membrane. Its subcellular location is the membrane. Its function is as follows. Calcium-binding protein involved in different processes such as regulation of vesicular trafficking, plasma membrane Na(+)/H(+) exchanger and gene transcription. Involved in the constitutive exocytic membrane traffic. Mediates the association between microtubules and membrane-bound organelles of the endoplasmic reticulum and Golgi apparatus and is also required for the targeting and fusion of transcytotic vesicles (TCV) with the plasma membrane. Functions as an integral cofactor in cell pH regulation by controlling plasma membrane-type Na(+)/H(+) exchange activity. Inhibits serum- and GTPase-stimulated Na(+)/H(+) exchange. Plays a role as an inhibitor of ribosomal RNA transcription. Acts as a negative regulator of the calcineurin/NFAT signaling pathway. The sequence is that of Calcineurin B homologous protein 1 (CHP1) from Gallus gallus (Chicken).